Consider the following 395-residue polypeptide: S-adenosylmethionine synthase (395 aa).

H16 contacts ATP. D18 is a binding site for Mg(2+). E44 lines the K(+) pocket. L-methionine contacts are provided by E57 and Q100. The flexible loop stretch occupies residues 100-110; it reads QSPDIAGGVNL. Residues 175-177, 242-243, D251, 257-258, A274, and K278 contribute to the ATP site; these read DGK, RF, and RK. D251 is an L-methionine binding site. An L-methionine-binding site is contributed by K282.

Belongs to the AdoMet synthase family. In terms of assembly, homotetramer; dimer of dimers. Mg(2+) serves as cofactor. The cofactor is K(+).

The protein resides in the cytoplasm. The catalysed reaction is L-methionine + ATP + H2O = S-adenosyl-L-methionine + phosphate + diphosphate. It participates in amino-acid biosynthesis; S-adenosyl-L-methionine biosynthesis; S-adenosyl-L-methionine from L-methionine: step 1/1. In terms of biological role, catalyzes the formation of S-adenosylmethionine (AdoMet) from methionine and ATP. The overall synthetic reaction is composed of two sequential steps, AdoMet formation and the subsequent tripolyphosphate hydrolysis which occurs prior to release of AdoMet from the enzyme. The polypeptide is S-adenosylmethionine synthase (Thermus thermophilus (strain ATCC BAA-163 / DSM 7039 / HB27)).